The chain runs to 499 residues: Ubiquitin carboxyl-terminal hydrolase 16 (499 aa).

In terms of domain architecture, USP spans 53–497 (VGLINRGNDC…YAYMLYYERV (445 aa)). Cys62 (nucleophile) is an active-site residue. Catalysis depends on His407, which acts as the Proton acceptor.

It belongs to the peptidase C19 family.

It carries out the reaction Thiol-dependent hydrolysis of ester, thioester, amide, peptide and isopeptide bonds formed by the C-terminal Gly of ubiquitin (a 76-residue protein attached to proteins as an intracellular targeting signal).. This Saccharomyces cerevisiae (strain ATCC 204508 / S288c) (Baker's yeast) protein is Ubiquitin carboxyl-terminal hydrolase 16 (UBP16).